The sequence spans 412 residues: 43 kDa receptor-associated protein of the synapse (412 aa).

Gly2 carries the N-myristoyl glycine lipid modification. 7 TPR repeats span residues 6 to 39 (TKQQIEKGLQLYQANETGKALEIWQQVVERSTEL), 83 to 116 (TEAYLNLARGHEKLCEFSEAVAYCRTCLGAEGGP), 123 to 156 (GQVCLSMGNAFLGLSAFQKALECFEKALRYAHGN), 163 to 196 (CRVCCSLGAFYVQLKDYEKALFFPCKSAELVADY), 206 to 239 (AMSRYHMAAAYRKLGRMDDAMECCEESMKIALQH), 246 to 279 (ALCLLCFADIHRHRSDIGKALPRYESSLNIMTEI), and 286 to 319 (AHVLLNIAKCWMTEKKLDKTLGVVQKAEELADAV). Position 196 is a phosphotyrosine (Tyr196). The RING-type zinc finger occupies 363 to 403 (CGLCGESIGDQNSQLQALPCSHLFHLKCLQTNGNRGCPNCK). Residue Ser405 is modified to Phosphoserine.

Belongs to the RAPsyn family.

Its subcellular location is the cell membrane. It is found in the postsynaptic cell membrane. The protein resides in the cytoplasm. It localises to the cytoskeleton. Postsynaptic protein required for clustering of nicotinic acetylcholine receptors (nAChRs) at the neuromuscular junction. It may link the receptor to the underlying postsynaptic cytoskeleton, possibly by direct association with actin or spectrin. In Tetronarce californica (Pacific electric ray), this protein is 43 kDa receptor-associated protein of the synapse (RAPSN).